We begin with the raw amino-acid sequence, 62 residues long: UPF0434 protein ABO_2103 (62 aa).

This sequence belongs to the UPF0434 family.

In Alcanivorax borkumensis (strain ATCC 700651 / DSM 11573 / NCIMB 13689 / SK2), this protein is UPF0434 protein ABO_2103.